The primary structure comprises 130 residues: Holo-[acyl-carrier-protein] synthase (130 aa).

Mg(2+) is bound by residues aspartate 8 and glutamate 62.

It belongs to the P-Pant transferase superfamily. AcpS family. The cofactor is Mg(2+).

The protein resides in the cytoplasm. It carries out the reaction apo-[ACP] + CoA = holo-[ACP] + adenosine 3',5'-bisphosphate + H(+). Functionally, transfers the 4'-phosphopantetheine moiety from coenzyme A to a Ser of acyl-carrier-protein. The protein is Holo-[acyl-carrier-protein] synthase of Polynucleobacter asymbioticus (strain DSM 18221 / CIP 109841 / QLW-P1DMWA-1) (Polynucleobacter necessarius subsp. asymbioticus).